We begin with the raw amino-acid sequence, 361 residues long: Peptide chain release factor 1 (361 aa).

Glutamine 235 carries the N5-methylglutamine modification.

Belongs to the prokaryotic/mitochondrial release factor family. Post-translationally, methylated by PrmC. Methylation increases the termination efficiency of RF1.

Its subcellular location is the cytoplasm. Peptide chain release factor 1 directs the termination of translation in response to the peptide chain termination codons UAG and UAA. In Chlamydia felis (strain Fe/C-56) (Chlamydophila felis), this protein is Peptide chain release factor 1.